Consider the following 235-residue polypeptide: Small ribosomal subunit protein uS3 (235 aa).

The KH type-2 domain maps to Val-39 to Arg-107.

Belongs to the universal ribosomal protein uS3 family. In terms of assembly, part of the 30S ribosomal subunit. Forms a tight complex with proteins S10 and S14.

Its function is as follows. Binds the lower part of the 30S subunit head. Binds mRNA in the 70S ribosome, positioning it for translation. This chain is Small ribosomal subunit protein uS3, found in Buchnera aphidicola subsp. Baizongia pistaciae (strain Bp).